We begin with the raw amino-acid sequence, 202 residues long: Peptidyl-tRNA hydrolase (202 aa).

Tyr-17 is a binding site for tRNA. Residue His-22 is the Proton acceptor of the active site. The tRNA site is built by Phe-76, Asn-78, and Asn-124.

It belongs to the PTH family. As to quaternary structure, monomer.

It localises to the cytoplasm. It catalyses the reaction an N-acyl-L-alpha-aminoacyl-tRNA + H2O = an N-acyl-L-amino acid + a tRNA + H(+). In terms of biological role, hydrolyzes ribosome-free peptidyl-tRNAs (with 1 or more amino acids incorporated), which drop off the ribosome during protein synthesis, or as a result of ribosome stalling. Its function is as follows. Catalyzes the release of premature peptidyl moieties from peptidyl-tRNA molecules trapped in stalled 50S ribosomal subunits, and thus maintains levels of free tRNAs and 50S ribosomes. This Nitratidesulfovibrio vulgaris (strain DSM 19637 / Miyazaki F) (Desulfovibrio vulgaris) protein is Peptidyl-tRNA hydrolase.